Here is a 308-residue protein sequence, read N- to C-terminus: MEEQGNNESAYISSILPGWFSEISPLWPGEAHSLKVEKILFQGKSDYQNVVVFQSSTYGKVLVLDGVIQLTERDECAYQEMITHLPLCSIPNPKKVLVIGGGDGGVLREVSRHSSVEQIDICEIDKMVIDVSKQFFPNVAIGYEDPRVKLHVGDGVAFLKNVPEGTYDAVIVDSSDPIGPAQELFEKPFFESVARALCPGGVVCTQAESIWLHMHIIEDIVSNCRQIFKGSVNYAWTTVPTYPSGVIGFMLCSTEGPAVDFKNPINPIDADDSHTKTRGPLKFYNSEIHSASFCLPSFAKRVIESNAK.

The PABS domain maps to 17–254 (PGWFSEISPL…GVIGFMLCST (238 aa)). Glutamine 48 is an S-adenosyl 3-(methylsulfanyl)propylamine binding site. A putrescine-binding site is contributed by tyrosine 78. Residues glutamine 79, aspartate 103, glutamate 123, 154–155 (DG), and aspartate 173 contribute to the S-adenosyl 3-(methylsulfanyl)propylamine site. The Proton acceptor role is filled by aspartate 173. Residues 173–176 (DSSD) and tyrosine 242 contribute to the putrescine site.

Belongs to the spermidine/spermine synthase family.

The catalysed reaction is S-adenosyl 3-(methylsulfanyl)propylamine + putrescine = S-methyl-5'-thioadenosine + spermidine + H(+). It functions in the pathway amine and polyamine biosynthesis; spermidine biosynthesis; spermidine from putrescine: step 1/1. This chain is Spermidine synthase 2, found in Hyoscyamus niger (Black henbane).